The following is a 214-amino-acid chain: Cell division protein SepF (214 aa).

The interval 23 to 70 is disordered; that stretch reads YYDDRAPSRGFPRPRFDDGYGRYDGDDYDDPRREPADCPPPAGYRGGY. The span at 36–58 shows a compositional bias: basic and acidic residues; that stretch reads PRFDDGYGRYDGDDYDDPRREPA.

It belongs to the SepF family. In terms of assembly, homodimer. Interacts with FtsZ.

The protein resides in the cytoplasm. Functionally, cell division protein that is part of the divisome complex and is recruited early to the Z-ring. Probably stimulates Z-ring formation, perhaps through the cross-linking of FtsZ protofilaments. Its function overlaps with FtsA. The polypeptide is Cell division protein SepF (Mycolicibacterium paratuberculosis (strain ATCC BAA-968 / K-10) (Mycobacterium paratuberculosis)).